Reading from the N-terminus, the 548-residue chain is Membrane protein insertase YidC (548 aa).

The helical transmembrane segment at 6-26 (NLLVIALLFVSFMIWQAWEQD) threads the bilayer. Residues 28-56 (NPQPQTQQTTQTTTTAAGSAADQGVPASG) form a disordered region. Residues 29–42 (PQPQTQQTTQTTTT) show a composition bias toward low complexity. 4 helical membrane-spanning segments follow: residues 350-370 (FVGNWGFSIIIITFIVRGIMY), 424-444 (FPLIIQMPIFLALYYMLMGSI), 458-478 (LSAQDPYYILPILMGVTMFFI), and 499-519 (PVIFTVFFLWFPSGLVLYYIV).

Belongs to the OXA1/ALB3/YidC family. Type 1 subfamily. In terms of assembly, interacts with the Sec translocase complex via SecD. Specifically interacts with transmembrane segments of nascent integral membrane proteins during membrane integration.

It is found in the cell inner membrane. In terms of biological role, required for the insertion and/or proper folding and/or complex formation of integral membrane proteins into the membrane. Involved in integration of membrane proteins that insert both dependently and independently of the Sec translocase complex, as well as at least some lipoproteins. Aids folding of multispanning membrane proteins. The sequence is that of Membrane protein insertase YidC from Salmonella dublin (strain CT_02021853).